A 393-amino-acid polypeptide reads, in one-letter code: NAD(P)H-quinone oxidoreductase subunit H, chloroplastic (393 aa).

It belongs to the complex I 49 kDa subunit family. As to quaternary structure, NDH is composed of at least 16 different subunits, 5 of which are encoded in the nucleus.

The protein localises to the plastid. Its subcellular location is the chloroplast thylakoid membrane. It carries out the reaction a plastoquinone + NADH + (n+1) H(+)(in) = a plastoquinol + NAD(+) + n H(+)(out). The enzyme catalyses a plastoquinone + NADPH + (n+1) H(+)(in) = a plastoquinol + NADP(+) + n H(+)(out). In terms of biological role, NDH shuttles electrons from NAD(P)H:plastoquinone, via FMN and iron-sulfur (Fe-S) centers, to quinones in the photosynthetic chain and possibly in a chloroplast respiratory chain. The immediate electron acceptor for the enzyme in this species is believed to be plastoquinone. Couples the redox reaction to proton translocation, and thus conserves the redox energy in a proton gradient. The polypeptide is NAD(P)H-quinone oxidoreductase subunit H, chloroplastic (Oenothera argillicola (Appalachian evening primrose)).